Here is a 1074-residue protein sequence, read N- to C-terminus: MELPDSPPPLDAPSPPHFLDAPQDRWNVFYPAVQTLVNALGGYEEVESPPDSGIFETVYRPGDSVLGVLKDLKKLWRKDDEDDERTVARCMYRAELMKELVAIVVECAERGEWGRKVALVACDLIAALTWPIDVAQELKEIEDEGPVVTDYASLLRAQLEYKALFLKTTKPLKSILSLMVPCLAKPRKDEKDSRIISLGLHVVRNLLAIKDAVAEGTATGEKEEFAHLQSDLITQLDSLTYLQLFLTLASCADKTDLNPFNVIVLDILHLIFRGIKPSELVQDQKRVPIDSLAKLLEKEKKQKALNSRVGSTRHSRFGTTITVKTAEQRVVLHRQTAIIENPGKILDMTKRKKAVVAKRMDDLTVFVNLSSDAMVILQSFSKAFLEICYNTFIESILRDIRMERTKIRPSDNIRVFYLSSFFIEYLLLLRHKLLQKGGSRRLEELPLGLVAQIAEMDSVKWLFARLRICWDDKPKAWTELQACIECFTQILLLIDDMSTSTNEEDVEVAEILQHQLYYNYDILDSALAVVREYKNQSIAYLDSIIHFAYVLLRMLEKYSKTKAFMFIRKRKNTHKKRKERQAASQANADREQRKIPEEYGDEGEEAFAPDEDAPSYAEHAFTFQSFEKRFAQEAVVNTLLTYLERFLEFDGPEPMKRVVGLMHRQVIKAHAEGLYFKVSTLIIFRRILDKQHVLPAAPSSRDLITLITYILRKFFKHVEKEPFTLVEALSSKSRGKWKTVGGGSDDDDDEMAGQRGRIKEKMGPVELQFIKKHKFSWSQQMSIAFAIIWGDGHGYLIKWIVEVLEQVLAAKQEIVLTTDGGINGDEDEEDEDGNARVRRFGRPSDEAISKFTQFDLQPEESEQITAVTSNPHFRLMLKLLSFDLPPPPMELDFEEDVSSEELALAREKSDSAWFLPANVLPSDIEASIGALKQYMEEPPTLDDDPKKLLRRKARATRRRRRSPSVESYDSETGEVRPGHQHKKNPRQKRAKKAVETQNYKSAAFIEDSDDEDPEATRRFFENEERLRREMDELAAQGGHPMMERGVKRKRGKKNGKGAISDTPPPSQRGNDRET.

Disordered regions lie at residues 572–595 (NTHK…QRKI) and 936–1074 (EEPP…DRET). 2 stretches are compositionally biased toward basic residues: residues 948-962 (LLRR…RRRS) and 978-991 (GHQH…KRAK). A compositionally biased stretch (basic and acidic residues) spans 1014–1031 (EATRRFFENEERLRREMD). Over residues 1046-1055 (VKRKRGKKNG) the composition is skewed to basic residues.

Belongs to the timeless family.

The protein resides in the nucleus. Its function is as follows. Involved in chromosome segregation during meiosis and DNA damage repair. In Cryptococcus neoformans var. neoformans serotype D (strain B-3501A) (Filobasidiella neoformans), this protein is Topoisomerase 1-associated factor 1 (TOF1).